A 469-amino-acid polypeptide reads, in one-letter code: Transcription factor E2FB (469 aa).

Disordered regions lie at residues 1–28 and 84–118; these read MSEE…PPLV and QTPV…AGSP. 2 stretches are compositionally biased toward polar residues: residues 8–22 and 100–118; these read QFPS…SLSS and SAKS…AGSP. The DNA-binding element occupies 129–194; that stretch reads RYDSSLGLLT…TLKNRIQWKG (66 aa). The stretch at 202–246 forms a coiled coil; sequence ETIESIANLQDEVQNLAAEEARLDDQIRESQERLTSLSEDENNKR. The segment at 210–238 is leucine-zipper; it reads LQDEVQNLAAEEARLDDQIRESQERLTSL. The disordered stretch occupies residues 319–374; sequence PQADEPSNVPDEPSNVPDVPSNLPSTSGLPENHDVSMPMKEESTERNMETQEVDDT. Residues 349–374 show a composition bias toward basic and acidic residues; that stretch reads ENHDVSMPMKEESTERNMETQEVDDT. The tract at residues 403 to 419 is retinoblastoma protein binding; the sequence is DYWFRSEVGEVSITDMW. A disordered region spans residues 426-469; that stretch reads DWNQMITFDQDHAGPSDNKILEQPQTPSSPTPEESTATRSPTGS. Over residues 447–469 the composition is skewed to low complexity; it reads EQPQTPSSPTPEESTATRSPTGS.

The protein belongs to the E2F/DP family. Heterodimer with DP proteins. Interacts (via dimerization domain) preferentially with DPA, but also with DPB. Interacts with PURA1 and retinoblastoma-related protein RBR1. Component of a DREAM-like complex which modulates a variety of developmentally regulated genes and of the mitotic genes in proliferating and differentiated cells. Interacts with MYB3R4 only at early stages of leaves development. Post-translationally, phosphorylated. As to expression, expressed in proliferating cells and several differentiated tissues. Detected in inflorescence and shoot apical meristems, cotyledonary vascular tissues, leaf primordia, young leaves, base of trichomes, central cylinder and elongation zone of roots, lateral root primordia, flowers, pistils of immature flowers and pollen grains.

The protein resides in the cytoplasm. It localises to the nucleus. Functionally, transcription activator that binds DNA cooperatively with DP proteins through the E2 recognition site, 5'-TTTC[CG]CGC-3' found in the promoter region of a number of genes whose products are involved in cell cycle regulation or in DNA replication. The binding of retinoblastoma-related proteins represses transactivation. Involved in the control of cell-cycle progression from G1 to S phase and from G2 to M phase. Stimulates cell proliferation and delays differentiation. Represses cell enlargement and endoreduplication in auxin-free conditions. The polypeptide is Transcription factor E2FB (E2FB) (Arabidopsis thaliana (Mouse-ear cress)).